A 237-amino-acid polypeptide reads, in one-letter code: Small ribosomal subunit protein uS3 (237 aa).

The 69-residue stretch at 39-107 folds into the KH type-2 domain; sequence VRQFLTKELK…PAQINISEVR (69 aa).

The protein belongs to the universal ribosomal protein uS3 family. As to quaternary structure, part of the 30S ribosomal subunit. Forms a tight complex with proteins S10 and S14.

Functionally, binds the lower part of the 30S subunit head. Binds mRNA in the 70S ribosome, positioning it for translation. This chain is Small ribosomal subunit protein uS3, found in Aeromonas hydrophila subsp. hydrophila (strain ATCC 7966 / DSM 30187 / BCRC 13018 / CCUG 14551 / JCM 1027 / KCTC 2358 / NCIMB 9240 / NCTC 8049).